The chain runs to 251 residues: Glucosamine-6-phosphate deaminase (251 aa).

D73 functions as the Proton acceptor; for enolization step in the catalytic mechanism. N142 acts as the For ring-opening step in catalysis. The Proton acceptor; for ring-opening step role is filled by H144. Catalysis depends on E149, which acts as the For ring-opening step.

The protein belongs to the glucosamine/galactosamine-6-phosphate isomerase family. NagB subfamily.

It carries out the reaction alpha-D-glucosamine 6-phosphate + H2O = beta-D-fructose 6-phosphate + NH4(+). Its pathway is amino-sugar metabolism; N-acetylneuraminate degradation; D-fructose 6-phosphate from N-acetylneuraminate: step 5/5. Catalyzes the reversible isomerization-deamination of glucosamine 6-phosphate (GlcN6P) to form fructose 6-phosphate (Fru6P) and ammonium ion. The sequence is that of Glucosamine-6-phosphate deaminase from Rhodopirellula baltica (strain DSM 10527 / NCIMB 13988 / SH1).